The sequence spans 1774 residues: 6-methylsalicylic acid synthase (1774 aa).

The span at 1 to 14 (MHSAATSTYPSGKT) shows a compositional bias: polar residues. Residues 1–21 (MHSAATSTYPSGKTSPAPVGT) form a disordered region. The region spanning 32–457 (SNDVAVVGMA…GTVSHAVIEE (426 aa)) is the Ketosynthase family 3 (KS3) domain. The interval 186-238 (RISYHLNLMGPSTAVDAACASSLVAIHHGVQAIRLGESKVAIVGGVNALCGPG) is acyltransferase. Catalysis depends on for beta-ketoacyl synthase activity residues Cys204, His339, and His379. The segment at 642–676 (NGITPQAVIGHSVGEIAASVVAGALSPAEGALIVT) is acetyl/malonyl transferases. The active-site For malonyltransferase activity is Ser653. The N-terminal hotdog fold stretch occupies residues 926-1045 (HTLLGQRIPV…AYWDRKVAGS (120 aa)). Residues 926-1202 (HTLLGQRIPV…FSEIEGTPGV (277 aa)) form the PKS/mFAS DH domain. The active-site Proton acceptor; for dehydratase activity is His958. Positions 1059 to 1202 (VTKLADNFSI…FSEIEGTPGV (144 aa)) are C-terminal hotdog fold. The active-site Proton donor; for dehydratase activity is Asp1123. The segment at 1403 to 1450 (GPRLLPRPEGTYLITGGLGVLGLEVADFLVEKGARRLLLISRRALPPR) is 2-oxoacyl reductase. 1419-1424 (GLGVLG) contributes to the NADP(+) binding site. The Carrier domain maps to 1698-1772 (AYLDEKIRGC…HLAVWFAEKL (75 aa)). Residue Ser1732 is modified to O-(pantetheine 4'-phosphoryl)serine.

As to quaternary structure, homomultimer.

It catalyses the reaction 3 malonyl-CoA + acetyl-CoA + NADPH + 3 H(+) = 6-methylsalicylate + 3 CO2 + NADP(+) + 4 CoA + H2O. It functions in the pathway mycotoxin biosynthesis; patulin biosynthesis. This multifunctional enzyme is a polyketide synthase. It catalyzes a total of 11 steps by seven different component enzymes, in the biosynthesis of the antibiotic patulin. The protein is 6-methylsalicylic acid synthase of Penicillium patulum (Penicillium griseofulvum).